Consider the following 277-residue polypeptide: Large ribosomal subunit protein uL2 (277 aa).

The disordered stretch occupies residues 222–277; that stretch reads GVTMNPVDHPHGGGEGRTSGGRHPVTPWGKPTKGKKTRSNKSTNKFILISRHKRKK.

Belongs to the universal ribosomal protein uL2 family. Part of the 50S ribosomal subunit. Forms a bridge to the 30S subunit in the 70S ribosome.

One of the primary rRNA binding proteins. Required for association of the 30S and 50S subunits to form the 70S ribosome, for tRNA binding and peptide bond formation. It has been suggested to have peptidyltransferase activity; this is somewhat controversial. Makes several contacts with the 16S rRNA in the 70S ribosome. This is Large ribosomal subunit protein uL2 from Rhodopseudomonas palustris (strain BisB18).